Consider the following 119-residue polypeptide: Large ribosomal subunit protein uL14 (119 aa).

It belongs to the universal ribosomal protein uL14 family. Part of the 50S ribosomal subunit. Forms a cluster with proteins L3 and L19. In the 70S ribosome, L14 and L19 interact and together make contacts with the 16S rRNA in bridges B5 and B8.

In terms of biological role, binds to 23S rRNA. Forms part of two intersubunit bridges in the 70S ribosome. The protein is Large ribosomal subunit protein uL14 of Ehrlichia ruminantium (strain Gardel).